A 1090-amino-acid polypeptide reads, in one-letter code: Exoglucanase B (1090 aa).

Residues 1 to 33 (MSSTTRRRSAWVAAATVGVSSFLAVAGITPAIA) form the signal peptide. The propeptide occupies 34 to 53 (AAGAGQPATVTVPAASPVRA). The interval 54–699 (AVDGEYAQRF…RLFDDGTTTP (646 aa)) is catalytic. The Nucleophile role is filled by aspartate 513. Fibronectin type-III domains lie at 706–791 (VPTG…TKAT), 797–887 (APSV…TKSD), and 897–984 (VPAG…TKTP). Residues 983–1090 (TPQTGGSCSV…SFTLNGASCT (108 aa)) form the CBM2 domain. Cysteine 990 and cysteine 1089 are oxidised to a cystine. A disordered region spans residues 1069 to 1090 (NGSHTGQNPNPASFTLNGASCT). Residues 1070 to 1090 (GSHTGQNPNPASFTLNGASCT) are compositionally biased toward polar residues.

The protein belongs to the glycosyl hydrolase 48 (cellulase L) family.

The enzyme catalyses Hydrolysis of (1-&gt;4)-beta-D-glucosidic linkages in cellulose and cellotetraose, releasing cellobiose from the non-reducing ends of the chains.. Its function is as follows. Hydrolyzes cellohexaose to a mixture of cellotetraose, cellotriose and cellobiose, with only a trace of glucose. It hydrolyzed cellopentaose to cellotriose and cellobiose, and cellotetraose to cellobiose, but it did not hydrolyze cellotriose. Also has weak endoglucanase activity. Hydrolyzes glucosidic bonds with inversion of anomeric configuration. The chain is Exoglucanase B (cbhB) from Cellulomonas fimi (strain ATCC 484 / DSM 20113 / JCM 1341 / CCUG 24087 / LMG 16345 / NBRC 15513 / NCIMB 8980 / NCTC 7547 / NRS-133).